Reading from the N-terminus, the 320-residue chain is Beta-sarcoglycan (320 aa).

Residues Met1–Ala10 show a composition bias toward low complexity. The segment at Met1–Val34 is disordered. Topologically, residues Met1 to Ala67 are cytoplasmic. The segment covering Ser23–Val34 has biased composition (basic and acidic residues). The chain crosses the membrane as a helical; Signal-anchor for type II membrane protein span at residues Ile68 to Ile88. Over Trp89–His320 the chain is Extracellular. Residues Asn160, Asn213, and Asn260 are each glycosylated (N-linked (GlcNAc...) asparagine). Cystine bridges form between Cys290/Cys316 and Cys292/Cys309.

It belongs to the sarcoglycan beta/delta/gamma/zeta family. Cross-link to form 2 major subcomplexes: one consisting of SGCB, SGCD and SGCG and the other consisting of SGCB and SGCD. The association between SGCB and SGCG is particularly strong while SGCA is loosely associated with the other sarcoglycans. In terms of processing, disulfide bonds are present. As to expression, most strongly expressed in skeletal and heart muscle. Also detected in proliferating myoblasts.

The protein resides in the cell membrane. The protein localises to the sarcolemma. It is found in the cytoplasm. Its subcellular location is the cytoskeleton. In terms of biological role, component of the sarcoglycan complex, a subcomplex of the dystrophin-glycoprotein complex which forms a link between the F-actin cytoskeleton and the extracellular matrix. This chain is Beta-sarcoglycan (Sgcb), found in Mus musculus (Mouse).